The following is a 207-amino-acid chain: NADH-ubiquinone oxidoreductase chain 6 (207 aa).

5 consecutive transmembrane segments (helical) span residues 15-35 (ILLD…ILVS), 40-60 (SILY…LIGI), 66-86 (LYIL…LSLF), 116-136 (LFIL…NNIY), and 184-204 (ILLI…IVLT).

This sequence belongs to the complex I subunit 6 family.

It localises to the mitochondrion membrane. It carries out the reaction a ubiquinone + NADH + 5 H(+)(in) = a ubiquinol + NAD(+) + 4 H(+)(out). In terms of biological role, core subunit of the mitochondrial membrane respiratory chain NADH dehydrogenase (Complex I) that is believed to belong to the minimal assembly required for catalysis. Complex I functions in the transfer of electrons from NADH to the respiratory chain. The immediate electron acceptor for the enzyme is believed to be ubiquinone. The sequence is that of NADH-ubiquinone oxidoreductase chain 6 (ND6) from Wickerhamomyces canadensis (Yeast).